The chain runs to 259 residues: UDP-2,3-diacylglucosamine hydrolase (259 aa).

Residues D8, H10, D41, N79, and H114 each contribute to the Mn(2+) site. 79 to 80 serves as a coordination point for substrate; it reads NR. Residues D122, S160, N164, K167, and H195 each contribute to the substrate site. Residues H195 and H197 each coordinate Mn(2+).

This sequence belongs to the LpxH family. Mn(2+) is required as a cofactor.

The protein localises to the cell inner membrane. It carries out the reaction UDP-2-N,3-O-bis[(3R)-3-hydroxytetradecanoyl]-alpha-D-glucosamine + H2O = 2-N,3-O-bis[(3R)-3-hydroxytetradecanoyl]-alpha-D-glucosaminyl 1-phosphate + UMP + 2 H(+). Its pathway is glycolipid biosynthesis; lipid IV(A) biosynthesis; lipid IV(A) from (3R)-3-hydroxytetradecanoyl-[acyl-carrier-protein] and UDP-N-acetyl-alpha-D-glucosamine: step 4/6. Hydrolyzes the pyrophosphate bond of UDP-2,3-diacylglucosamine to yield 2,3-diacylglucosamine 1-phosphate (lipid X) and UMP by catalyzing the attack of water at the alpha-P atom. Involved in the biosynthesis of lipid A, a phosphorylated glycolipid that anchors the lipopolysaccharide to the outer membrane of the cell. In Edwardsiella ictaluri (strain 93-146), this protein is UDP-2,3-diacylglucosamine hydrolase.